The following is a 322-amino-acid chain: Cytochrome c biogenesis protein CcsA (322 aa).

A run of 8 helical transmembrane segments spans residues 9–29 (ILTH…LITL), 44–64 (GMIA…IYSG), 71–91 (LYES…VPYF), 98–118 (LTTI…SGLL), 143–163 (MILS…LLVI), 226–246 (VISL…VWAN), 253–273 (WSWD…AIYL), and 287–307 (AIVA…VNLL).

Belongs to the CcmF/CycK/Ccl1/NrfE/CcsA family. In terms of assembly, may interact with Ccs1.

It is found in the plastid. It localises to the chloroplast thylakoid membrane. Required during biogenesis of c-type cytochromes (cytochrome c6 and cytochrome f) at the step of heme attachment. The polypeptide is Cytochrome c biogenesis protein CcsA (Guizotia abyssinica (Niger)).